The primary structure comprises 18141 residues: Titin (18141 aa).

Over residues 1 to 31 (MQRQNPNPYQQQNQQHQQVQQFSSQEYSHSS) the composition is skewed to low complexity. The disordered stretch occupies residues 1-69 (MQRQNPNPYQ…QHHGGSIGGA (69 aa)). Residues 32 to 47 (QEQHQEQRISRTEQHV) show a composition bias toward basic and acidic residues. Low complexity predominate over residues 48 to 62 (QRSQVTTQRQVQQHH). Ig-like domains are found at residues 86-177 (PPVF…VYIQ), 255-343 (PQIS…AVLA), 372-461 (PAFV…AQLN), 471-559 (PQFV…ARLY), 618-708 (PQFI…AILS), 751-842 (PQFI…SSIR), 890-981 (PQFK…AQLT), 1024-1115 (PRFL…ATMI), 1158-1249 (PVFV…ACVR), 1291-1381 (PQFT…CSVR), 1424-1515 (PRFL…VELQ), 1558-1643 (PVFT…EAIT), 1691-1781 (PVFT…ASLI), 1824-1917 (PVFV…LNVT), 1958-2050 (PQFG…VNVT), 2089-2180 (PIFL…CNVR), and 2222-2313 (PHFT…TNLR). Residues 236–266 (EQDSQLSQELDRNQGPAQAPQISQKPRSSKL) form a disordered region. A disulfide bond links Cys393 and Cys445. Intrachain disulfides connect Cys1312–Cys1365, Cys1446–Cys1499, and Cys1579–Cys1632. A disulfide bridge links Cys1846 with Cys1899. A disulfide bridge connects residues Cys2111 and Cys2164. Over residues 2338–2347 (STAPHQRQEP) the composition is skewed to basic and acidic residues. A disordered region spans residues 2338 to 2357 (STAPHQRQEPETPGTRQRPV). 3 consecutive Ig-like domains span residues 2356-2449 (PVFT…MRVV), 2488-2581 (PIFT…MKVK), and 2622-2715 (PVFT…LKIE). The interval 2731–2750 (PRIGELEAPKEGRPEAPEPT) is disordered. A compositionally biased stretch (basic and acidic residues) spans 2734-2746 (GELEAPKEGRPEA). Ig-like domains are found at residues 2754–2844 (PVFI…GTLK), 2891–2983 (PPVW…TTIF), 3029–3116 (PRFT…AEIS), 3130–3221 (PRFT…TTLN), 3263–3354 (PKFI…ASLK), 3401–3494 (PVFT…MKIQ), 3539–3625 (PEFI…ATVS), 3676–3767 (PKFT…AKVT), and 3811–3901 (PKFT…ATVS). A disulfide bond links Cys2775 and Cys2828. Residues Cys3152 and Cys3205 are joined by a disulfide bond. 3 disulfide bridges follow: Cys3560-Cys3613, Cys3698-Cys3751, and Cys3832-Cys3885. The TPR 1 repeat unit spans residues 3910–3944 (LQNQVPRGMKRSDALTQMEATIKKYTSEVHLTEDD). 2 consecutive Ig-like domains span residues 3954-4047 (PRFV…IKVS) and 4092-4181 (PVFV…LKVV). A disulfide bridge links Cys3976 with Cys4029. The stretch at 4204 to 4229 (AAYQKERQENELEKVFDERKQVLSEQ) forms a coiled coil. 2 disordered regions span residues 4226-4254 (LSEQ…DWQQ) and 4299-4336 (SSQA…PSES). The span at 4309 to 4322 (YEENLQEKTSTTEV) shows a compositional bias: polar residues. 4 consecutive Ig-like domains span residues 4394-4482 (PVFT…ANLV), 4497-4585 (PSFV…GDCI), 4604-4692 (PHIV…AQLK), and 4703-4791 (PTIT…AKLT). The stretch at 4403 to 4438 (CRVFENEQAKFEVEFEGEPNPTVKWYRESFPIQNSP) is one TPR 2 repeat. Cysteines 4625 and 4676 form a disulfide. Disordered regions lie at residues 4803–4891 (RTID…DKGV), 5318–5368 (DELV…QPEP), 5413–5648 (RVIP…EVDA), 5667–5701 (IKKT…VPQK), 5718–5748 (KKTK…EVVQ), 5775–5982 (KEEE…QRLL), 6034–6350 (KRVK…MPVD), and 6364–6393 (EEEV…EASV). Over residues 4822–4841 (PESPHAFQPGQQPGQQFGQF) the composition is skewed to low complexity. Basic residues predominate over residues 4852–4863 (GRSRQKKPKVRS). Basic and acidic residues-rich tracts occupy residues 5344–5357 (QPQE…HDEL), 5436–5447 (RPKEAVKAEEIQ), 5541–5552 (QKPDEQKQELPK), 5591–5621 (IEEK…EKPE), and 5633–5645 (PKSE…HPDE). The stretch at 5575-5613 (PVLWERKKKKPQPQDVIEEKLDVAPTKTYEKAVDVLPDE) is one TPR 3 repeat. Over residues 5681–5697 (EELFEEQPEEEISPEEE) the composition is skewed to acidic residues. Composition is skewed to acidic residues over residues 5779-5792 (IPTE…ETAE) and 5818-5860 (DVEE…QDEI). The span at 5865–5874 (RKVKKAKKPK) shows a compositional bias: basic residues. A compositionally biased stretch (acidic residues) spans 5883–5904 (EIEEDQPEEEVLQEEIIGEQEE). Positions 5910–5920 (RKVKSIKKPKK) are enriched in basic residues. Over residues 5921–5971 (VVTEKTVDQTEQPEKPEESQAEEVKETVTEEPKKPKPAPEEAKVEQVEKIS) the composition is skewed to basic and acidic residues. Over residues 6034 to 6043 (KRVKKKKPKT) the composition is skewed to basic residues. Residues 6049 to 6079 (ESTEEPAEETEEFEEEATQPEEVQPVEEIPE) are compositionally biased toward acidic residues. Basic and acidic residues-rich tracts occupy residues 6081–6092 (PQVKEVADERKT), 6099–6133 (RKEE…EVRL), 6141–6169 (IKPE…EEKR), 6195–6209 (EAEH…KPEE), 6217–6234 (KRGE…EKKW), and 6259–6268 (PIEEQQKPEK). Acidic residues predominate over residues 6281-6290 (PESEEEELEL). Residues 6291-6306 (EPLKLPEDKKPKEPKA) are compositionally biased toward basic and acidic residues. Residues 6307 to 6318 (KKEKKKKPKLKK) show a composition bias toward basic residues. Acidic residues-rich tracts occupy residues 6325 to 6349 (EVSE…EMPV) and 6364 to 6373 (EEEVVPTEET). Ig-like domains lie at 6536–6624 (PRIT…TNII), 6633–6728 (PQFT…NILS), 6741–6830 (PTVT…VVVS), 6841–6929 (PRFI…ATVN), 6942–7034 (PRFV…VKIQ), 7066–7151 (PKII…VAVT), and 7189–7279 (PSLL…FDIS). Cys6557 and Cys6608 form a disulfide bridge. Cys6964 and Cys7016 are disulfide-bonded. Residues 7621 to 7663 (KIQVQTKQIAQMNTKIKKHKKHKQQEQEVSETTIQCEQKETLA) adopt a coiled-coil conformation. Disordered regions lie at residues 7773–7793 (AKTA…VKAQ), 9414–9440 (EEDD…EEIQ), 9485–9510 (EEDD…PEEI), 9556–9582 (EEDD…EEIQ), 9627–9652 (EEDD…PEEI), 9698–9724 (EEDD…EEIQ), 9769–9796 (EEDD…EIQE), 9838–9865 (TAEE…PEEI), 9911–9937 (EEDD…EEIQ), 9982–10008 (EEDD…EEIQ), 10053–10080 (EEDD…EIQE), 10125–10149 (ENDK…PEEI), 10195–10220 (EEDD…PEEI), 10266–10291 (EEDD…PEEI), 10337–10364 (EEDD…EIQE), 10408–10433 (EEDD…PEEI), 10479–10504 (EEDD…PEEI), 10550–10576 (EEDD…EEIQ), 10621–10648 (EEDD…EIQE), 10692–10717 (EEDD…PEEI), 10763–10788 (EEDD…PEEI), 10834–10860 (EEDD…EEIQ), 10905–10932 (EEDD…EIQE), 11047–11073 (EEDD…EEIQ), 11118–11143 (EEDD…PEEI), 11189–11216 (EEDD…EIQE), 11260–11286 (EEDD…EEIQ), 11679–11703 (EELD…RGPD), and 11767–11795 (TEPE…LETP). Residues 7774–7783 (KTAESSKELP) are compositionally biased toward basic and acidic residues. Composition is skewed to acidic residues over residues 9429–9440 (VPYEEEKPEEIQ), 9500–9510 (VPYEEEKPEEI), 9571–9582 (VPYEEEKPEEIQ), 9642–9652 (VPYEEEKPEEI), 9713–9724 (VPYEEEKPEEIQ), 9784–9796 (VPYE…EIQE), 9855–9865 (VPYEEEKPEEI), 9926–9937 (VPYEEEKPEEIQ), 9997–10008 (VPYEEEKPEEIQ), 10068–10080 (VPYE…EIQE), 10139–10149 (VPYEEEKPEEI), 10210–10220 (VPYEEEKPEEI), 10281–10291 (VPYEEEKPEEI), 10352–10364 (VPYE…EIQE), 10423–10433 (VPYEEEKPEEI), 10494–10504 (VPYEEEKPEEI), 10565–10576 (VPYEEEKPEEIQ), 10636–10648 (VPYE…EIQE), 10707–10717 (VPYEEEKPEEI), 10778–10788 (VPYEEEKPEEI), 10849–10860 (VPYEEEKPEEIQ), 10920–10932 (VPYE…EIQE), 11062–11073 (VPYEEEKPEEIQ), 11133–11143 (VPYEEEKPEEI), 11204–11216 (VPYE…EIQE), and 11275–11286 (VPYEEEKPEEIQ). Over residues 11686–11699 (KPKKKTTKTRTFKK) the composition is skewed to basic residues. The segment covering 11780–11792 (PTKDKTPKQKKTL) has biased composition (basic and acidic residues). The TPR 4 repeat unit spans residues 11872 to 11905 (KTVLQPYQRTEMELPQRARRDSSFKQPVKLTPMK). Disordered stretches follow at residues 12003–12201 (FKHS…ADTK), 12451–12471 (TLQV…KKPE), 12685–12767 (TVDD…LPGP), 12943–12971 (IDHE…KEKS), 13131–13154 (IKKK…ETRP), 13325–13349 (QSFE…KPKK), 13471–13492 (EEYE…KSHN), 13554–13576 (EADK…PLKK), 13702–13792 (KVQK…KSPD), 13891–13914 (EEVQ…KAKK), 13951–13994 (MKRK…DEPK), 14073–14094 (TTVP…RTKK), 14109–14322 (EEEA…QVTT), 14354–14377 (EYEP…RKVK), 14414–14448 (PLDS…ETPV), 14533–14566 (EPEI…KVKK), 14583–14720 (KVDL…SELP), and 14756–14789 (VEES…KSKK). Composition is skewed to basic and acidic residues over residues 12022–12035 (ESDH…ELLH), 12044–12054 (EKIETPDESRK), 12124–12134 (MERTSDIREES), 12183–12201 (LNLR…ADTK), 12457–12471 (TEHE…KKPE), and 12685–12709 (TVDD…KISE). Acidic residues predominate over residues 12731–12741 (HDEDLQTDEYS). The segment covering 12750 to 12760 (KSKKKSTKKQK) has biased composition (basic residues). Residues 13141-13154 (GPKEQVFEITETRP) are compositionally biased toward basic and acidic residues. Over residues 13482–13492 (KKPKKKVKSHN) the composition is skewed to basic residues. One copy of the TPR 5 repeat lies at 13566–13599 (QPIKKEKPLKKKKDVEYPVSLEAFDHTVKVVSEP). A compositionally biased stretch (basic and acidic residues) spans 13733–13747 (LVKEDLDQPIERALE). Basic residues predominate over residues 13771–13781 (PKPKKISKPKS). 2 stretches are compositionally biased toward basic and acidic residues: residues 13893-13906 (VQEK…EKKA) and 13975-13984 (EDKPVEKISE). Positions 14221-14240 (TVEKPLEALHTDSDLEKPDV) are enriched in basic and acidic residues. Low complexity predominate over residues 14264–14274 (KISSEQPKQPS). Residues 14282–14294 (VTEHDLKPEEEKP) are compositionally biased toward basic and acidic residues. Positions 14542-14554 (IEEHPEQSKEKLA) are enriched in basic and acidic residues. The span at 14555-14564 (PKPKKTVRKV) shows a compositional bias: basic residues. Residues 14583-14599 (KVDLEKYEKVEMPEKPV) are compositionally biased toward basic and acidic residues. The segment covering 14652–14662 (ETTVDTTDIPE) has biased composition (low complexity). The span at 14664 to 14683 (TPTQTAQPEDTATAQITPSA) shows a compositional bias: polar residues. Positions 14684-14697 (QEEKSTQDDTKDTI) are enriched in basic and acidic residues. Acidic residues predominate over residues 14756-14771 (VEESQPIVEEVEDEEP). One copy of the TPR 6 repeat lies at 14904–14936 (IPKTTDIGAIKDNGELSRNIEEAEEILKFKPHK). Disordered stretches follow at residues 14956 to 15208 (EKYI…VSVK), 15301 to 15329 (TRKK…IQPD), 15425 to 15448 (ISET…ETPK), 15578 to 15597 (IRVS…QFTV), 15697 to 15722 (EKPA…PKPE), 15825 to 15876 (EEPK…VEEP), 15951 to 15973 (ESQP…KAPI), and 16181 to 16206 (QEEE…KPLQ). 10 stretches are compositionally biased toward basic and acidic residues: residues 14967-14989 (EKTP…DVKL), 15024-15046 (ELKQ…KDGE), 15069-15080 (QIEHPEIPEKVK), 15088-15097 (KPKDKSKSEP), 15109-15139 (PKEE…EIKL), 15169-15179 (IEDKAIDDEKK), 15189-15198 (QPKEQEIAKE), 15316-15325 (VTLKEPKEEQ), 15425-15437 (ISET…KPIE), and 15578-15589 (IRVSESEPKPEE). Over residues 15703–15716 (IVEEEEPVVTEPIE) the composition is skewed to acidic residues. The span at 15951 to 15964 (ESQPEAVEDKEVSL) shows a compositional bias: basic and acidic residues. Over residues 16183–16193 (EEYEEGEDIEE) the composition is skewed to acidic residues. The SH3 domain maps to 16409–16470 (ENLNIMYSIC…PAQYLMEPEE (62 aa)). Ig-like domains lie at 16501 to 16590 (PRFI…TELI), 16625 to 16719 (PTFS…ITLK), 16728 to 16811 (PQIL…ANLT), 16822 to 16916 (PPLF…VEVD), 16919 to 17001 (TFTK…STVE), 17007 to 17091 (PDFI…CELV), 17097 to 17180 (PEIV…AKLT), 17184 to 17270 (PLVD…TKLC), and 17277 to 17363 (PPVI…AEAS). Cysteines 16940 and 16989 form a disulfide. One can recognise a Fibronectin type-III 1 domain in the interval 17374 to 17467 (APGTPQPLEI…LSPPIRLVPK (94 aa)). 2 Ig-like domains span residues 17473 to 17558 (PSVQ…CRLK) and 17563 to 17653 (PVLE…CTVQ). Cys17494 and Cys17542 form a disulfide bridge. 4 Fibronectin type-III domains span residues 17660–17755 (RPQS…TKKF), 17760–17861 (PPRG…TPPS), 17862–17958 (PPQN…THAS), and 17982–18078 (PPTG…AMTA). One copy of the TPR 7 repeat lies at 17694–17728 (LEKCDVQNNVWMKVSDFNKDIKSYAVQKLSMNAQY). The tract at residues 17741 to 17771 (SEPTESDPVTITKKFEKPSPPRGPTTVSGMN) is disordered.

Belongs to the protein kinase superfamily. CAMK Ser/Thr protein kinase family. As to quaternary structure, interacts with Msp300; this interaction mediates the recruitment of Msp300 to the Z-disks. Expressed in the mesoderm at stage 11, several hours before myoblast fusion, and persists in most muscle cells, somatic, visceral and pharyngeal muscles and their precursors, until the third instar. Isoform A: Expressed in the indirect flight muscle (at protein level).

The protein localises to the cytoplasm. Its subcellular location is the nucleus. It localises to the chromosome. It is found in the myofibril. The protein resides in the sarcomere. The protein localises to the z line. Key component in the assembly and functioning of adult and embryonic striated muscles and muscle tendons. By providing connections at the level of individual microfilaments, it contributes to the fine balance of forces between the two halves of the sarcomere. The size and extensibility of the cross-links are the main determinants of sarcomere extensibility properties of muscle. In non-muscle cells, seems to play a role in chromosome condensation and chromosome segregation during mitosis. Might link the lamina network to chromatin or nuclear actin, or both during interphase. This chain is Titin (sls), found in Drosophila melanogaster (Fruit fly).